Consider the following 101-residue polypeptide: Small ribosomal subunit protein uS17 (101 aa).

This sequence belongs to the universal ribosomal protein uS17 family. Part of the 30S ribosomal subunit.

One of the primary rRNA binding proteins, it binds specifically to the 5'-end of 16S ribosomal RNA. This is Small ribosomal subunit protein uS17 from Leifsonia xyli subsp. xyli (strain CTCB07).